A 148-amino-acid polypeptide reads, in one-letter code: Large ribosomal subunit protein uL15 (148 aa).

Positions 1–61 (MKINDLKPAP…GGQMPLQRRV (61 aa)) are disordered.

Belongs to the universal ribosomal protein uL15 family. As to quaternary structure, part of the 50S ribosomal subunit.

Binds to the 23S rRNA. The sequence is that of Large ribosomal subunit protein uL15 from Thermodesulfovibrio yellowstonii (strain ATCC 51303 / DSM 11347 / YP87).